Reading from the N-terminus, the 1039-residue chain is L-arabinokinase (1039 aa).

Residues 662-678 traverse the membrane as a helical segment; it reads AAYVAGTILVLMIELGV. Residue 693–703 coordinates ATP; the sequence is PEGKGVSSSAA. Aspartate 745 serves as the catalytic Proton acceptor.

Belongs to the GHMP kinase family.

The protein resides in the membrane. It catalyses the reaction L-arabinose + ATP = beta-L-arabinose 1-phosphate + ADP + H(+). Arabinose kinase. Involved in the salvage pathway which converts free L-arabinose to UDP-L-arabinose. May play a role in arabinose transport. This is L-arabinokinase (ARA1) from Arabidopsis thaliana (Mouse-ear cress).